We begin with the raw amino-acid sequence, 88 residues long: UPF0250 protein Sputcn32_2874 (88 aa).

The protein belongs to the UPF0250 family.

The polypeptide is UPF0250 protein Sputcn32_2874 (Shewanella putrefaciens (strain CN-32 / ATCC BAA-453)).